The primary structure comprises 35 residues: Photosystem II reaction center protein T (35 aa).

A helical transmembrane segment spans residues 3–23 (ALVYTFLLIGTLGIIFFAIFF).

The protein belongs to the PsbT family. PSII is composed of 1 copy each of membrane proteins PsbA, PsbB, PsbC, PsbD, PsbE, PsbF, PsbH, PsbI, PsbJ, PsbK, PsbL, PsbM, PsbT, PsbY, PsbZ, Psb30/Ycf12, at least 3 peripheral proteins of the oxygen-evolving complex and a large number of cofactors. It forms dimeric complexes.

The protein resides in the plastid. The protein localises to the chloroplast thylakoid membrane. Found at the monomer-monomer interface of the photosystem II (PS II) dimer, plays a role in assembly and dimerization of PSII. PSII is a light-driven water plastoquinone oxidoreductase, using light energy to abstract electrons from H(2)O, generating a proton gradient subsequently used for ATP formation. This is Photosystem II reaction center protein T from Coleochaete orbicularis (Charophycean green alga).